Consider the following 243-residue polypeptide: Carboxy-S-adenosyl-L-methionine synthase (243 aa).

S-adenosyl-L-methionine contacts are provided by residues tyrosine 40, 65–67 (GCS), 90–91 (DN), 118–119 (DI), asparagine 133, and arginine 200.

Belongs to the class I-like SAM-binding methyltransferase superfamily. Cx-SAM synthase family. As to quaternary structure, homodimer.

The catalysed reaction is prephenate + S-adenosyl-L-methionine = carboxy-S-adenosyl-L-methionine + 3-phenylpyruvate + H2O. Catalyzes the conversion of S-adenosyl-L-methionine (SAM) to carboxy-S-adenosyl-L-methionine (Cx-SAM). In Shewanella woodyi (strain ATCC 51908 / MS32), this protein is Carboxy-S-adenosyl-L-methionine synthase.